The primary structure comprises 208 residues: MNQRYPSALLENAVNELASLPGVGRKTALRLALYMLRRDVGYTENFAAALVALRRDVKYCKVCHNICDDEVCSICANPSRDHSLVCVVENIKEVMAIENTGQFRGVYHVLGGIISPMDGIGPGDLRIDSLVRRVAEGEVKEIILALSTTMEGDTTNFFIYRKLSGYDVRISVIARGVSIGDEIEYADEITLGRSIINRTEFNLTSSNS.

Residues 60–75 (CKVCHNICDDEVCSIC) form a C4-type zinc finger. Positions 83 to 178 (SLVCVVENIK…RISVIARGVS (96 aa)) constitute a Toprim domain.

The protein belongs to the RecR family.

May play a role in DNA repair. It seems to be involved in an RecBC-independent recombinational process of DNA repair. It may act with RecF and RecO. The polypeptide is Recombination protein RecR (Parabacteroides distasonis (strain ATCC 8503 / DSM 20701 / CIP 104284 / JCM 5825 / NCTC 11152)).